Reading from the N-terminus, the 325-residue chain is Beta-ketoacyl-[acyl-carrier-protein] synthase III (325 aa).

Residues Cys-119 and His-252 contribute to the active site. The interval 253-257 (QANIR) is ACP-binding. Residue Asn-282 is part of the active site.

Belongs to the thiolase-like superfamily. FabH family. In terms of assembly, homodimer.

It localises to the cytoplasm. It catalyses the reaction malonyl-[ACP] + acetyl-CoA + H(+) = 3-oxobutanoyl-[ACP] + CO2 + CoA. The protein operates within lipid metabolism; fatty acid biosynthesis. Functionally, catalyzes the condensation reaction of fatty acid synthesis by the addition to an acyl acceptor of two carbons from malonyl-ACP. Catalyzes the first condensation reaction which initiates fatty acid synthesis and may therefore play a role in governing the total rate of fatty acid production. Possesses both acetoacetyl-ACP synthase and acetyl transacylase activities. Its substrate specificity determines the biosynthesis of branched-chain and/or straight-chain of fatty acids. This is Beta-ketoacyl-[acyl-carrier-protein] synthase III from Acidovorax ebreus (strain TPSY) (Diaphorobacter sp. (strain TPSY)).